The primary structure comprises 523 residues: Peptide chain release factor 3 (523 aa).

The 268-residue stretch at N10–G277 folds into the tr-type G domain. Residues S19 to T26, D87 to H91, and N141 to D144 contribute to the GTP site.

Belongs to the TRAFAC class translation factor GTPase superfamily. Classic translation factor GTPase family. PrfC subfamily.

The protein resides in the cytoplasm. In terms of biological role, increases the formation of ribosomal termination complexes and stimulates activities of RF-1 and RF-2. It binds guanine nucleotides and has strong preference for UGA stop codons. It may interact directly with the ribosome. The stimulation of RF-1 and RF-2 is significantly reduced by GTP and GDP, but not by GMP. The protein is Peptide chain release factor 3 of Lactobacillus delbrueckii subsp. bulgaricus (strain ATCC BAA-365 / Lb-18).